Consider the following 344-residue polypeptide: Dihydroorotate dehydrogenase (quinone) (344 aa).

FMN contacts are provided by residues 65–69 (AGLDK) and Thr-89. Lys-69 is a substrate binding site. 114–118 (NRMGF) is a binding site for substrate. Asn-145 and Asn-178 together coordinate FMN. Asn-178 contacts substrate. The active-site Nucleophile is Ser-181. Asn-183 is a substrate binding site. Positions 223 and 251 each coordinate FMN. 252–253 (NT) is a substrate binding site. FMN is bound by residues Gly-274, Gly-303, and 324-325 (YS).

The protein belongs to the dihydroorotate dehydrogenase family. Type 2 subfamily. As to quaternary structure, monomer. The cofactor is FMN.

The protein localises to the cell membrane. It catalyses the reaction (S)-dihydroorotate + a quinone = orotate + a quinol. Its pathway is pyrimidine metabolism; UMP biosynthesis via de novo pathway; orotate from (S)-dihydroorotate (quinone route): step 1/1. In terms of biological role, catalyzes the conversion of dihydroorotate to orotate with quinone as electron acceptor. The polypeptide is Dihydroorotate dehydrogenase (quinone) (Cupriavidus necator (strain ATCC 17699 / DSM 428 / KCTC 22496 / NCIMB 10442 / H16 / Stanier 337) (Ralstonia eutropha)).